The following is a 1220-amino-acid chain: Protein transport protein Sec31A (1220 aa).

WD repeat units lie at residues 4 to 47 (KEVD…EIFE), 68 to 111 (RYHK…AGDK), 120 to 160 (KHTG…TPMT), 166 to 206 (QPPE…PIIK), 209 to 254 (DHSN…SPLR), 258 to 298 (NHAR…VLYE), and 301 to 342 (TNTQ…DGLR). Positions 161-471 (PGAKTQPPED…IDASQTEFEK (311 aa)) are interaction with SEC13. A WD 8; interaction with SEC13 repeat occupies 397 to 430 (SFSFGGKLVTFENVRMPSHQGAEQQQQQHHVFIS). Serine 527 and serine 532 each carry phosphoserine. Lysine 647 participates in a covalent cross-link: Glycyl lysine isopeptide (Lys-Gly) (interchain with G-Cter in ubiquitin). Disordered regions lie at residues 791-908 (GEPV…NAYP) and 924-1096 (QLYA…GNTF). A Phosphoserine modification is found at serine 799. Positions 800–1113 (PKIPYEKQQL…TKKITKKPIP (314 aa)) are interaction with PDCD6. Residues 842-848 (GFIMHGN) carry the ALG-2-binding site motif-2 (ABS-2) motif. The span at 849 to 859 (VNPNAAGQLPT) shows a compositional bias: polar residues. Residues 869 to 882 (PPYPQPQPYQPAQP) show a composition bias toward pro residues. The span at 962-972 (PSSSAYALPPG) shows a compositional bias: low complexity. 2 stretches are compositionally biased toward polar residues: residues 984-995 (PASQRTGPQNGW) and 1031-1053 (PQSQMLQQQPSAPVPLSSQSSFP). The residue at position 1161 (threonine 1161) is a Phosphothreonine. Serine 1163 is modified (phosphoserine). Residue lysine 1217 forms a Glycyl lysine isopeptide (Lys-Gly) (interchain with G-Cter in ubiquitin) linkage.

This sequence belongs to the WD repeat SEC31 family. As to quaternary structure, COPII is composed of at least 5 proteins: the SEC23/24 complex, the SEC13/31 complex and SAR1. SEC13 and SEC31 make a 2:2 tetramer that forms the edge element of the COPII outer coat. The tetramer self-assembles in multiple copies to form the complete polyhedral cage. Interacts (via WD 8) with SEC13. Interacts with PDCD6; interaction takes place in response to cytosolic calcium increase and leads to bridge together the BCR(KLHL12) complex and SEC31A, leading to monoubiquitination. Interacts with KLHL12. Monoubiquitinated by the BCR(KLHL12) E3 ubiquitin ligase complex, leading to regulate the size of COPII coats. As to expression, abundantly and ubiquitously expressed.

It is found in the cytoplasm. Its subcellular location is the cytoplasmic vesicle. The protein localises to the COPII-coated vesicle membrane. The protein resides in the endoplasmic reticulum membrane. It localises to the cytosol. Functionally, component of the coat protein complex II (COPII) which promotes the formation of transport vesicles from the endoplasmic reticulum (ER). The coat has two main functions, the physical deformation of the endoplasmic reticulum membrane into vesicles and the selection of cargo molecules. This chain is Protein transport protein Sec31A (SEC31A), found in Homo sapiens (Human).